The sequence spans 73 residues: Gas vesicle protein A (73 aa).

Belongs to the gas vesicle GvpA family. In terms of assembly, the gas vesicle shell is 2 nm thick and consists of a single layer of this protein. It forms helical ribs nearly perpendicular to the long axis of the vesicle.

The protein localises to the gas vesicle shell. In terms of biological role, gas vesicles are hollow, gas filled proteinaceous nanostructures found in some microorganisms. During planktonic growth they allow positioning of the organism at a favorable depth for light or nutrient acquisition. GvpA forms the protein shell. The chain is Gas vesicle protein A from Nostoc punctiforme (strain ATCC 29133 / PCC 73102).